Here is a 340-residue protein sequence, read N- to C-terminus: Chitinase 7 (340 aa).

Residues 1–32 form the signal peptide; it reads MIAARAANLQVAMKALALAVLALAYAAATARA. The Chitin-binding type-1 domain maps to 33–73; the sequence is EQCGRQAGGARCPNRLCCSRWGWCGLTDDYCKGGCQSQCRV. Cystine bridges form between Cys35-Cys50, Cys44-Cys56, Cys49-Cys63, Cys67-Cys71, Cys118-Cys173, Cys185-Cys193, and Cys293-Cys323.

This sequence belongs to the glycosyl hydrolase 19 family. Chitinase class I subfamily. In terms of tissue distribution, expressed in pistils, stamens and lodicules.

The catalysed reaction is Random endo-hydrolysis of N-acetyl-beta-D-glucosaminide (1-&gt;4)-beta-linkages in chitin and chitodextrins.. In terms of biological role, hydrolyzes chitin and may play a role in defense against fungal pathogens containing chitin. The protein is Chitinase 7 (Cht7) of Oryza sativa subsp. indica (Rice).